We begin with the raw amino-acid sequence, 429 residues long: Bifunctional protein GlmU (429 aa).

Positions 1 to 223 (MKTSILILAA…EDEFMGINDK (223 aa)) are pyrophosphorylase. Residues 8-11 (LAAG), K22, and 81-82 (GT) contribute to the UDP-N-acetyl-alpha-D-glucosamine site. D102 provides a ligand contact to Mg(2+). UDP-N-acetyl-alpha-D-glucosamine contacts are provided by G135, E149, N164, and N221. Residue N221 participates in Mg(2+) binding. Positions 224 to 244 (FELSIAENFMQKKIKKYWMQQ) are linker. The tract at residues 245–429 (GVIFHLPQST…KDYYYKKFQK (185 aa)) is N-acetyltransferase. UDP-N-acetyl-alpha-D-glucosamine contacts are provided by R308 and K325. H336 acts as the Proton acceptor in catalysis. Y339 and N350 together coordinate UDP-N-acetyl-alpha-D-glucosamine. Acetyl-CoA is bound by residues 359–360 (NY), S378, A396, and R413.

In the N-terminal section; belongs to the N-acetylglucosamine-1-phosphate uridyltransferase family. This sequence in the C-terminal section; belongs to the transferase hexapeptide repeat family. As to quaternary structure, homotrimer. Mg(2+) is required as a cofactor.

It localises to the cytoplasm. The enzyme catalyses alpha-D-glucosamine 1-phosphate + acetyl-CoA = N-acetyl-alpha-D-glucosamine 1-phosphate + CoA + H(+). The catalysed reaction is N-acetyl-alpha-D-glucosamine 1-phosphate + UTP + H(+) = UDP-N-acetyl-alpha-D-glucosamine + diphosphate. It participates in nucleotide-sugar biosynthesis; UDP-N-acetyl-alpha-D-glucosamine biosynthesis; N-acetyl-alpha-D-glucosamine 1-phosphate from alpha-D-glucosamine 6-phosphate (route II): step 2/2. The protein operates within nucleotide-sugar biosynthesis; UDP-N-acetyl-alpha-D-glucosamine biosynthesis; UDP-N-acetyl-alpha-D-glucosamine from N-acetyl-alpha-D-glucosamine 1-phosphate: step 1/1. It functions in the pathway bacterial outer membrane biogenesis; LPS lipid A biosynthesis. Catalyzes the last two sequential reactions in the de novo biosynthetic pathway for UDP-N-acetylglucosamine (UDP-GlcNAc). The C-terminal domain catalyzes the transfer of acetyl group from acetyl coenzyme A to glucosamine-1-phosphate (GlcN-1-P) to produce N-acetylglucosamine-1-phosphate (GlcNAc-1-P), which is converted into UDP-GlcNAc by the transfer of uridine 5-monophosphate (from uridine 5-triphosphate), a reaction catalyzed by the N-terminal domain. The polypeptide is Bifunctional protein GlmU (Campylobacter jejuni subsp. jejuni serotype O:2 (strain ATCC 700819 / NCTC 11168)).